The following is a 179-amino-acid chain: uncharacterized protein (179 aa).

A signal peptide (or 24) is located at residues 1-27 (MKTISKQLSAVIFPFIFSACVSQSASS).

This is an uncharacterized protein from Haemophilus influenzae (strain ATCC 51907 / DSM 11121 / KW20 / Rd).